Reading from the N-terminus, the 880-residue chain is Valine--tRNA ligase (880 aa).

The short motif at 51–61 (PNVTGELHLGH) is the 'HIGH' region element. A 'KMSKS' region motif is present at residues 529–533 (KMSKT). Position 532 (Lys-532) interacts with ATP. Residues 815 to 854 (MSTMVDLEAEAKRVEAEIAELETQIERLSARLSDTQFLAK) are a coiled coil.

The protein belongs to the class-I aminoacyl-tRNA synthetase family. ValS type 1 subfamily. Monomer.

Its subcellular location is the cytoplasm. It carries out the reaction tRNA(Val) + L-valine + ATP = L-valyl-tRNA(Val) + AMP + diphosphate. Catalyzes the attachment of valine to tRNA(Val). As ValRS can inadvertently accommodate and process structurally similar amino acids such as threonine, to avoid such errors, it has a 'posttransfer' editing activity that hydrolyzes mischarged Thr-tRNA(Val) in a tRNA-dependent manner. The polypeptide is Valine--tRNA ligase (Dehalococcoides mccartyi (strain ATCC BAA-2266 / KCTC 15142 / 195) (Dehalococcoides ethenogenes (strain 195))).